Reading from the N-terminus, the 191-residue chain is Molybdenum cofactor guanylyltransferase (191 aa).

GTP is bound by residues 11–13 (LCG), K23, D66, and D97. Residue D97 participates in Mg(2+) binding.

The protein belongs to the MobA family. In terms of assembly, monomer. The cofactor is Mg(2+).

The protein resides in the cytoplasm. The catalysed reaction is Mo-molybdopterin + GTP + H(+) = Mo-molybdopterin guanine dinucleotide + diphosphate. Its function is as follows. Transfers a GMP moiety from GTP to Mo-molybdopterin (Mo-MPT) cofactor (Moco or molybdenum cofactor) to form Mo-molybdopterin guanine dinucleotide (Mo-MGD) cofactor. The polypeptide is Molybdenum cofactor guanylyltransferase (Campylobacter jejuni subsp. jejuni serotype O:6 (strain 81116 / NCTC 11828)).